Consider the following 99-residue polypeptide: Transcription factor 1 (99 aa).

May be involved in preference for HM-URA DNA stretches follow at residues 52–77 (PVARQARKGFNPQTQEALEIAPSVGV) and 90–99 (EGLKYEDFAK). 2 DNA-binding regions span residues Phe-61 and 93–94 (KY).

This sequence belongs to the bacterial histone-like protein family. In terms of assembly, homodimer.

Its function is as follows. Selectively binds to and inhibits the transcription of hydroxymethyluracil-(hmUra)-containing DNA, such as SP01 DNA, by RNA polymerase in vitro. The sequence is that of Transcription factor 1 (TF1) from Bacillus phage SP01 (Bacteriophage SP01).